Consider the following 446-residue polypeptide: MGRKKIKIQRIPDERNRQVTFNKRKNGLIKKAMELALLCDSTVSLVIVNNSPNAKEKYFQYISSGLPSPMESIPDLGPEISQKFTDHDYDKIFNKKEKGDFNDDYIGGDTASHSEEEDHKSPSSTPELLGYNHHNHHHHHHQYNNNSNNNNNNHNNNHNNYNNSNNINGHNNHYNHNNLKLNSNNNNNNSQFNSSQHINKPILSIKPSQTQENHNHYNNYSSHLSNNNNNNNSSNNNNNSNNNNNNNNNNNTNNNNTNNNNNNNNNNNNNNNNNNNNNNNNNMSPIGSPPSKCQQVPAFDSTQATQALLSLHNASKLFCSSPEDTSPMTSPRTPPFSSTNTNTLQTSPNSQQKSKSLPPLIFNENNNQNNNNQNNNQNNNNNNSNNTNTNNNNQNNSSRSILLPPISLYNSNSNSNSSSTLTSPTSSSSNLNDDLFLKKRKLELIH.

In terms of domain architecture, MADS-box spans 1–61 (MGRKKIKIQR…PNAKEKYFQY (61 aa)). Disordered stretches follow at residues 95 to 195 (KKEK…FNSS), 210 to 296 (TQEN…CQQV), and 319 to 432 (CSSP…SNLN). Positions 112–121 (SHSEEEDHKS) are enriched in basic and acidic residues. Residues 133–142 (HHNHHHHHHQ) are compositionally biased toward basic residues. 2 stretches are compositionally biased toward low complexity: residues 143 to 195 (YNNN…FNSS) and 216 to 282 (HYNN…NNNN). Positions 322 to 355 (PEDTSPMTSPRTPPFSSTNTNTLQTSPNSQQKSK) are enriched in polar residues. Residues 365–432 (NNNQNNNNQN…SPTSSSSNLN (68 aa)) show a composition bias toward low complexity.

Its subcellular location is the nucleus. The polypeptide is Serum factor response D (srfD) (Dictyostelium discoideum (Social amoeba)).